The primary structure comprises 163 residues: Large ribosomal subunit protein uL15 (163 aa).

The protein belongs to the universal ribosomal protein uL15 family. In terms of assembly, part of the 50S ribosomal subunit.

In terms of biological role, binds to the 23S rRNA. The polypeptide is Large ribosomal subunit protein uL15 (Orientia tsutsugamushi (strain Ikeda) (Rickettsia tsutsugamushi)).